Reading from the N-terminus, the 827-residue chain is MIPLTSELVAIGKTATDKADAIAQAVDLLTAAGKIDPRYGQSMMGREAVANTFLGNGIAIPHGLPQDRDLIHDTAIAVVQLPAGVEWAPGDTARLVVAIAAKSDEHLQVLSNLTDVLGDEAEAERLATTLDAAVIVARLTGAAAPVAAPAETPADFAQGIDVVVTGAHGLHARPATTLVDLAKGFAAEIRIRNGAKVANGKSLISLLNLGAAQGAALRISAEGADATAALAAIAAAFEAGLEDEEDTGAAAPEAATPGLTGAGASMASYEGRTLVGISSSPGYALAPVFRFARDEVVFDTDAADAAFETDRLDTALQTAWHELEELHDEVWKTSGPARAAIFRAHQEFLHDPEMVAEAKALIGQGRSAGFAWHRVFSDRADMLGAMKDAVLSGRAIDLRDAGQRVLQHLGRVRTGETHLPTAPCILLADDLTPSDTARLDPALVRGLATAQGGPTSHTSIIARALDIPAVAGVGPRLLDLATGTPVLLDGGAGVIVVAPTEADKARAETAMAALTAQRELEARERYKPALTVDGARVEVVANISDVAEAIASVEAGAEGVGLLRTEFLFVNREAPPGEDEQLAIYAAMLSALNGLPIIIRTLDVGGDKEIPYLRMPVEQNPFLGERGIRFCLSHEDLFRTQLRAIYRASAGGQVRIMFPMIAMIEELETARRIAEEVRLEVGAAPVEIGIMIEIPSAVMMAPELAKRVDFFSIGTNDLTQYALAMDRMHPVLAKQADGLHPAVLRLIDSTVRAAEAARIWVGACGGIAGDPVGAAVLSGLGVRELSVSIPAVAGIKAQLRHSAMAENRDLARRALACTTAAEVRGLK.

The PTS EIIA type-2 domain occupies 2–142 (IPLTSELVAI…AVIVARLTGA (141 aa)). Catalysis depends on H62, which acts as the Tele-phosphohistidine intermediate; for EIIA activity. H62 is subject to Phosphohistidine; by HPr. The HPr domain occupies 157-245 (AQGIDVVVTG…AFEAGLEDEE (89 aa)). H171 acts as the Pros-phosphohistidine intermediate; for HPr activity in catalysis. H171 carries the phosphohistidine; by EI modification. The PTS EI stretch occupies residues 270–827 (EGRTLVGISS…TTAAEVRGLK (558 aa)). H457 serves as the catalytic Tele-phosphohistidine intermediate; for PTS EI activity. H457 is subject to Phosphohistidine; by autocatalysis. R564 and R600 together coordinate phosphoenolpyruvate. Residues E693 and D717 each contribute to the Mg(2+) site. Phosphoenolpyruvate-binding positions include 716–717 (ND) and R727. Catalysis depends on C764, which acts as the Proton donor.

This sequence belongs to the PEP-utilizing enzyme family. The cofactor is Mg(2+).

The protein resides in the cytoplasm. It catalyses the reaction L-histidyl-[protein] + phosphoenolpyruvate = N(pros)-phospho-L-histidyl-[protein] + pyruvate. Functionally, the phosphoenolpyruvate-dependent sugar phosphotransferase system (sugar PTS), a major carbohydrate active transport system, catalyzes the phosphorylation of incoming sugar substrates concomitantly with their translocation across the cell membrane. The enzyme II FruAB PTS system is involved in fructose transport. The sequence is that of Multiphosphoryl transfer protein from Rhodobacter capsulatus (Rhodopseudomonas capsulata).